The chain runs to 211 residues: uncharacterized protein (211 aa).

3 helical membrane passes run 22–42 (FINF…GLKV), 111–131 (IIGA…WFPV), and 133–153 (GMAG…FMIT).

To E.coli YkgB. This sequence to H.influenzae HI_0219.

The protein localises to the cell membrane. This is an uncharacterized protein from Mannheimia haemolytica (Pasteurella haemolytica).